Here is a 223-residue protein sequence, read N- to C-terminus: UPF0441 protein YgiB (223 aa).

The disordered stretch occupies residues E201–G223. A compositionally biased stretch (polar residues) spans A204 to G223.

Belongs to the UPF0441 family.

The chain is UPF0441 protein YgiB from Salmonella gallinarum (strain 287/91 / NCTC 13346).